The following is a 118-amino-acid chain: Non-specific lipid-transfer protein (118 aa).

A signal peptide spans 1–27 (MGVSKVAIAVAVMLMVVVINHPAVVEG). Disulfide bonds link C30–C75, C40–C54, C55–C100, and C77–C114.

The protein belongs to the plant LTP family. In terms of processing, disulfide bonds.

Plant non-specific lipid-transfer proteins transfer phospholipids as well as galactolipids across membranes. May play a role in wax or cutin deposition in the cell walls of expanding epidermal cells and certain secretory tissues. This chain is Non-specific lipid-transfer protein, found in Apium graveolens (Celery).